The following is a 61-amino-acid chain: Large ribosomal subunit protein uL30 (61 aa).

It belongs to the universal ribosomal protein uL30 family. Part of the 50S ribosomal subunit.

The chain is Large ribosomal subunit protein uL30 from Corynebacterium glutamicum (strain R).